Here is a 154-residue protein sequence, read N- to C-terminus: Catabolic 3-dehydroquinase (154 aa).

The active-site Proton acceptor is the tyrosine 25. 3 residues coordinate substrate: asparagine 79, histidine 85, and aspartate 92. Histidine 105 functions as the Proton donor in the catalytic mechanism. Residues 106–107 and arginine 116 each bind substrate; that span reads IS.

It belongs to the type-II 3-dehydroquinase family. As to quaternary structure, homododecamer. Adopts a ring-like structure, composed of an arrangement of two hexameric rings stacked on top of one another.

The enzyme catalyses 3-dehydroquinate = 3-dehydroshikimate + H2O. The protein operates within aromatic compound metabolism; 3,4-dihydroxybenzoate biosynthesis; 3,4-dihydroxybenzoate from 3-dehydroquinate: step 1/2. Is involved in the catabolism of quinate. Allows the utilization of quinate as carbon source via the beta-ketoadipate pathway. This chain is Catabolic 3-dehydroquinase, found in Botryotinia fuckeliana (strain B05.10) (Noble rot fungus).